The primary structure comprises 367 residues: 4-hydroxy-3-methylbut-2-en-1-yl diphosphate synthase (flavodoxin) (367 aa).

[4Fe-4S] cluster-binding residues include Cys270, Cys273, Cys305, and Glu312.

It belongs to the IspG family. Requires [4Fe-4S] cluster as cofactor.

The enzyme catalyses (2E)-4-hydroxy-3-methylbut-2-enyl diphosphate + oxidized [flavodoxin] + H2O + 2 H(+) = 2-C-methyl-D-erythritol 2,4-cyclic diphosphate + reduced [flavodoxin]. The protein operates within isoprenoid biosynthesis; isopentenyl diphosphate biosynthesis via DXP pathway; isopentenyl diphosphate from 1-deoxy-D-xylulose 5-phosphate: step 5/6. Its function is as follows. Converts 2C-methyl-D-erythritol 2,4-cyclodiphosphate (ME-2,4cPP) into 1-hydroxy-2-methyl-2-(E)-butenyl 4-diphosphate. The polypeptide is 4-hydroxy-3-methylbut-2-en-1-yl diphosphate synthase (flavodoxin) (Pasteurella multocida (strain Pm70)).